Here is a 118-residue protein sequence, read N- to C-terminus: UPF0102 protein Dtur_1530 (118 aa).

Belongs to the UPF0102 family.

The polypeptide is UPF0102 protein Dtur_1530 (Dictyoglomus turgidum (strain DSM 6724 / Z-1310)).